A 498-amino-acid polypeptide reads, in one-letter code: Glutamate--tRNA ligase (498 aa).

Residues 10–20 (PSPTGYFHIGG) carry the 'HIGH' region motif. The 'KMSKS' region motif lies at 252–256 (KLSKR). Residue lysine 255 participates in ATP binding.

The protein belongs to the class-I aminoacyl-tRNA synthetase family. Glutamate--tRNA ligase type 1 subfamily. As to quaternary structure, monomer.

It localises to the cytoplasm. It carries out the reaction tRNA(Glu) + L-glutamate + ATP = L-glutamyl-tRNA(Glu) + AMP + diphosphate. In terms of biological role, catalyzes the attachment of glutamate to tRNA(Glu) in a two-step reaction: glutamate is first activated by ATP to form Glu-AMP and then transferred to the acceptor end of tRNA(Glu). The protein is Glutamate--tRNA ligase of Mycoplasmoides gallisepticum (strain R(low / passage 15 / clone 2)) (Mycoplasma gallisepticum).